A 34-amino-acid polypeptide reads, in one-letter code: Corticostatin-6 (34 aa).

3 disulfides stabilise this stretch: C3–C31, C5–C20, and C10–C30.

Belongs to the alpha-defensin family. As to expression, lung, spleen, small intestine, pituitary gland, adrenal medulla and plasma.

It is found in the secreted. In terms of biological role, microbicidal activity and inhibits corticotropin (ACTH) stimulated corticosterone production. This is Corticostatin-6 from Oryctolagus cuniculus (Rabbit).